Reading from the N-terminus, the 747-residue chain is Polyribonucleotide nucleotidyltransferase (747 aa).

Asp-487 and Asp-493 together coordinate Mg(2+). The 60-residue stretch at 554-613 (PSTTTIKIDKDKIRDIIGPGGKVIKEICETSGAKIDISDDGSVSVYASDRDKLKVALDKI) folds into the KH domain. The 69-residue stretch at 623 to 691 (GEIFNGTVMK…NKGKAKLTIK (69 aa)) folds into the S1 motif domain. Residues 691–747 (KNADKDKSSNNPKPKNNVNNAKENSEPERRDSSKKRAWNEDSNNDKEEAITERKYFN) form a disordered region. The span at 699 to 712 (SNNPKPKNNVNNAK) shows a compositional bias: low complexity. Basic and acidic residues predominate over residues 727–747 (AWNEDSNNDKEEAITERKYFN).

This sequence belongs to the polyribonucleotide nucleotidyltransferase family. Mg(2+) serves as cofactor.

The protein localises to the cytoplasm. It catalyses the reaction RNA(n+1) + phosphate = RNA(n) + a ribonucleoside 5'-diphosphate. Involved in mRNA degradation. Catalyzes the phosphorolysis of single-stranded polyribonucleotides processively in the 3'- to 5'-direction. This Rickettsia felis (strain ATCC VR-1525 / URRWXCal2) (Rickettsia azadi) protein is Polyribonucleotide nucleotidyltransferase.